The chain runs to 1216 residues: ATP-dependent helicase/nuclease subunit A (1216 aa).

The UvrD-like helicase ATP-binding domain maps to 26–488 (QKKTAEQIEA…IILKENFRSS (463 aa)). ATP is bound at residue 47 to 54 (ASAGSGKT). Residues 515 to 802 (KHQLVFANTK…ELMTIHKSKG (288 aa)) enclose the UvrD-like helicase C-terminal domain.

This sequence belongs to the helicase family. AddA subfamily. Heterodimer of AddA and AddB/RexB. Mg(2+) serves as cofactor.

The enzyme catalyses Couples ATP hydrolysis with the unwinding of duplex DNA by translocating in the 3'-5' direction.. The catalysed reaction is ATP + H2O = ADP + phosphate + H(+). Functionally, the heterodimer acts as both an ATP-dependent DNA helicase and an ATP-dependent, dual-direction single-stranded exonuclease. Recognizes the chi site generating a DNA molecule suitable for the initiation of homologous recombination. The AddA nuclease domain is required for chi fragment generation; this subunit has the helicase and 3' -&gt; 5' nuclease activities. This Streptococcus pneumoniae serotype 2 (strain D39 / NCTC 7466) protein is ATP-dependent helicase/nuclease subunit A.